We begin with the raw amino-acid sequence, 434 residues long: Probable glycine dehydrogenase (decarboxylating) subunit 1 (434 aa).

This sequence belongs to the GcvP family. N-terminal subunit subfamily. In terms of assembly, the glycine cleavage system is composed of four proteins: P, T, L and H. In this organism, the P 'protein' is a heterodimer of two subunits.

It catalyses the reaction N(6)-[(R)-lipoyl]-L-lysyl-[glycine-cleavage complex H protein] + glycine + H(+) = N(6)-[(R)-S(8)-aminomethyldihydrolipoyl]-L-lysyl-[glycine-cleavage complex H protein] + CO2. Its function is as follows. The glycine cleavage system catalyzes the degradation of glycine. The P protein binds the alpha-amino group of glycine through its pyridoxal phosphate cofactor; CO(2) is released and the remaining methylamine moiety is then transferred to the lipoamide cofactor of the H protein. In Thermoplasma volcanium (strain ATCC 51530 / DSM 4299 / JCM 9571 / NBRC 15438 / GSS1), this protein is Probable glycine dehydrogenase (decarboxylating) subunit 1.